The chain runs to 277 residues: Shikimate dehydrogenase (NADP(+)) (277 aa).

Residues 15–17 (SLS) and T62 each bind shikimate. K66 functions as the Proton acceptor in the catalytic mechanism. Positions 87 and 102 each coordinate shikimate. NADP(+) contacts are provided by residues 127–131 (GAGGA), 151–156 (NRTVDK), and I219. Y221 is a shikimate binding site. Residue G242 participates in NADP(+) binding.

Belongs to the shikimate dehydrogenase family. In terms of assembly, homodimer.

The catalysed reaction is shikimate + NADP(+) = 3-dehydroshikimate + NADPH + H(+). The protein operates within metabolic intermediate biosynthesis; chorismate biosynthesis; chorismate from D-erythrose 4-phosphate and phosphoenolpyruvate: step 4/7. Functionally, involved in the biosynthesis of the chorismate, which leads to the biosynthesis of aromatic amino acids. Catalyzes the reversible NADPH linked reduction of 3-dehydroshikimate (DHSA) to yield shikimate (SA). This Bacillus cereus (strain AH820) protein is Shikimate dehydrogenase (NADP(+)).